The primary structure comprises 471 residues: 3-isopropylmalate dehydratase large subunit (471 aa).

Cys347, Cys407, and Cys410 together coordinate [4Fe-4S] cluster. Residues 417–443 (TLQPGERSASTSNRNFEGRQGKGGRTH) are disordered.

The protein belongs to the aconitase/IPM isomerase family. LeuC type 1 subfamily. In terms of assembly, heterodimer of LeuC and LeuD. [4Fe-4S] cluster serves as cofactor.

It catalyses the reaction (2R,3S)-3-isopropylmalate = (2S)-2-isopropylmalate. Its pathway is amino-acid biosynthesis; L-leucine biosynthesis; L-leucine from 3-methyl-2-oxobutanoate: step 2/4. Its function is as follows. Catalyzes the isomerization between 2-isopropylmalate and 3-isopropylmalate, via the formation of 2-isopropylmaleate. This Nocardioides sp. (strain ATCC BAA-499 / JS614) protein is 3-isopropylmalate dehydratase large subunit.